Consider the following 140-residue polypeptide: Large ribosomal subunit protein uL11 (140 aa).

The protein belongs to the universal ribosomal protein uL11 family. As to quaternary structure, part of the ribosomal stalk of the 50S ribosomal subunit. Interacts with L10 and the large rRNA to form the base of the stalk. L10 forms an elongated spine to which L12 dimers bind in a sequential fashion forming a multimeric L10(L12)X complex. In terms of processing, one or more lysine residues are methylated.

In terms of biological role, forms part of the ribosomal stalk which helps the ribosome interact with GTP-bound translation factors. This chain is Large ribosomal subunit protein uL11, found in Desulfatibacillum aliphaticivorans.